Reading from the N-terminus, the 202-residue chain is Holliday junction branch migration complex subunit RuvA (202 aa).

Positions 1-63 (MIEYLKGAIV…EDAHLLYGFS (63 aa)) are domain I. Residues 64–142 (TKEERTLFGQ…LETSSDEILS (79 aa)) are domain II. The tract at residues 143–153 (ARTAVGDAALN) is flexible linker. The tract at residues 153–202 (NTIASGEEAISALKMLGFADPAIRKAVKSILSEDSSLAVEDIIKRALRML) is domain III.

This sequence belongs to the RuvA family. As to quaternary structure, homotetramer. Forms an RuvA(8)-RuvB(12)-Holliday junction (HJ) complex. HJ DNA is sandwiched between 2 RuvA tetramers; dsDNA enters through RuvA and exits via RuvB. An RuvB hexamer assembles on each DNA strand where it exits the tetramer. Each RuvB hexamer is contacted by two RuvA subunits (via domain III) on 2 adjacent RuvB subunits; this complex drives branch migration. In the full resolvosome a probable DNA-RuvA(4)-RuvB(12)-RuvC(2) complex forms which resolves the HJ.

Its subcellular location is the cytoplasm. Its function is as follows. The RuvA-RuvB-RuvC complex processes Holliday junction (HJ) DNA during genetic recombination and DNA repair, while the RuvA-RuvB complex plays an important role in the rescue of blocked DNA replication forks via replication fork reversal (RFR). RuvA specifically binds to HJ cruciform DNA, conferring on it an open structure. The RuvB hexamer acts as an ATP-dependent pump, pulling dsDNA into and through the RuvAB complex. HJ branch migration allows RuvC to scan DNA until it finds its consensus sequence, where it cleaves and resolves the cruciform DNA. The chain is Holliday junction branch migration complex subunit RuvA from Porphyromonas gingivalis (strain ATCC BAA-308 / W83).